Here is a 319-residue protein sequence, read N- to C-terminus: Cytochrome f (319 aa).

The N-terminal stretch at 1-34 (MQNRNTYDLKKKMTRLISVLVMIHIITRTSISNA) is a signal peptide. 4 residues coordinate heme: Tyr35, Cys55, Cys58, and His59. Residues 285–304 (VKGLLLFLASVILAQIFLVL) traverse the membrane as a helical segment.

Belongs to the cytochrome f family. As to quaternary structure, the 4 large subunits of the cytochrome b6-f complex are cytochrome b6, subunit IV (17 kDa polypeptide, petD), cytochrome f and the Rieske protein, while the 4 small subunits are PetG, PetL, PetM and PetN. The complex functions as a dimer. Requires heme as cofactor.

The protein resides in the plastid. Its subcellular location is the chloroplast thylakoid membrane. Component of the cytochrome b6-f complex, which mediates electron transfer between photosystem II (PSII) and photosystem I (PSI), cyclic electron flow around PSI, and state transitions. The sequence is that of Cytochrome f (petA) from Picea abies (Norway spruce).